A 675-amino-acid polypeptide reads, in one-letter code: NADH-quinone oxidoreductase subunit G (675 aa).

The region spanning 1–78 (MIKLIIDGSE…GMVIHTDTSM (78 aa)) is the 2Fe-2S ferredoxin-type domain. Positions 34, 45, 48, and 62 each coordinate [2Fe-2S] cluster. The 40-residue stretch at 78 to 117 (MVKKAREGVMEFLLINHPLDCPICDQGGECDLQDQAFRYG) folds into the 4Fe-4S His(Cys)3-ligated-type domain. Histidine 94, cysteine 98, cysteine 101, cysteine 107, cysteine 146, cysteine 149, cysteine 152, and cysteine 196 together coordinate [4Fe-4S] cluster. One can recognise a 4Fe-4S Mo/W bis-MGD-type domain in the interval 215 to 271 (LKHTASIGVHDAEGSNIRIDSRADEIMRILPSVNEAINEAWISDKNRFCYDGLKYQR).

It belongs to the complex I 75 kDa subunit family. It depends on [2Fe-2S] cluster as a cofactor. [4Fe-4S] cluster is required as a cofactor.

The catalysed reaction is a quinone + NADH + 5 H(+)(in) = a quinol + NAD(+) + 4 H(+)(out). NDH-1 shuttles electrons from NADH, via FMN and iron-sulfur (Fe-S) centers, to quinones in the respiratory chain. Couples the redox reaction to proton translocation (for every two electrons transferred, four hydrogen ions are translocated across the cytoplasmic membrane), and thus conserves the redox energy in a proton gradient. The chain is NADH-quinone oxidoreductase subunit G (nuoG) from Rickettsia typhi (strain ATCC VR-144 / Wilmington).